Consider the following 51-residue polypeptide: Ribosome biogenesis protein Nop10 (51 aa).

It belongs to the NOP10 family.

Involved in ribosome biogenesis; more specifically in 18S rRNA pseudouridylation and in cleavage of pre-rRNA. The polypeptide is Ribosome biogenesis protein Nop10 (Methanococcus maripaludis (strain C7 / ATCC BAA-1331)).